The following is a 223-amino-acid chain: MAEEADLLGQDSDGDSEEVILTPAELIDRLEQAWMNEKFAPELLENKSEIVECVMEQLEHMEENLKRAKKGDLKVSIHQMEMERIRFVLSSYLRCRLMKIEKFFPHTLEKEKTRREEEPPILSPEELVFAKEFLANTETYLKDTALKHMPPNLQKVDLLRTVPKPDLDAYVFLRVKERQENILVEPENDEQRDYVIDLEEGSQHLMRYRTVAPLVASGAIQLI.

N-acetylmethionine is present on M1. 2 positions are modified to phosphoserine: S12 and S16. The tract at residues D166 to I223 is important for GINS complex assembly.

The protein belongs to the GINS4/SLD5 family. As to quaternary structure, component of the CMG helicase complex, a hexameric ring of related MCM2-7 subunits stabilized by CDC45 and the tetrameric GINS complex. Associated with ORC2. Interacts with HELB.

It is found in the nucleus. It localises to the chromosome. In terms of biological role, required for initiation of chromosomal DNA replication. Core component of CDC45-MCM-GINS (CMG) helicase, the molecular machine that unwinds template DNA during replication, and around which the replisome is built. The chain is DNA replication complex GINS protein SLD5 (GINS4) from Bos taurus (Bovine).